Here is a 537-residue protein sequence, read N- to C-terminus: Phosphoenolpyruvate carboxykinase (ATP) (537 aa).

3 residues coordinate substrate: Arg61, Tyr195, and Lys201. Residues Lys201, His220, and 236-244 (GLSGTGKTT) each bind ATP. Positions 201 and 220 each coordinate Mn(2+). Asp257 is a binding site for Mn(2+). Glu285, Arg323, and Thr448 together coordinate ATP. Arg323 serves as a coordination point for substrate.

The protein belongs to the phosphoenolpyruvate carboxykinase (ATP) family. It depends on Mn(2+) as a cofactor.

The protein resides in the cytoplasm. It catalyses the reaction oxaloacetate + ATP = phosphoenolpyruvate + ADP + CO2. It functions in the pathway carbohydrate biosynthesis; gluconeogenesis. Involved in the gluconeogenesis. Catalyzes the conversion of oxaloacetate (OAA) to phosphoenolpyruvate (PEP) through direct phosphoryl transfer between the nucleoside triphosphate and OAA. This Rhodopseudomonas palustris (strain HaA2) protein is Phosphoenolpyruvate carboxykinase (ATP).